Here is a 296-residue protein sequence, read N- to C-terminus: Formamidopyrimidine-DNA glycosylase (296 aa).

Pro-2 acts as the Schiff-base intermediate with DNA in catalysis. Glu-3 functions as the Proton donor in the catalytic mechanism. Catalysis depends on Lys-61, which acts as the Proton donor; for beta-elimination activity. DNA is bound by residues His-104, Arg-123, and Lys-169. An FPG-type zinc finger spans residues 255–289; that stretch reads DAYGREGEPCRRCGAIMRREKFMNRSSFYCPRCQP. Catalysis depends on Arg-279, which acts as the Proton donor; for delta-elimination activity.

It belongs to the FPG family. As to quaternary structure, monomer. Zn(2+) serves as cofactor.

The enzyme catalyses Hydrolysis of DNA containing ring-opened 7-methylguanine residues, releasing 2,6-diamino-4-hydroxy-5-(N-methyl)formamidopyrimidine.. The catalysed reaction is 2'-deoxyribonucleotide-(2'-deoxyribose 5'-phosphate)-2'-deoxyribonucleotide-DNA = a 3'-end 2'-deoxyribonucleotide-(2,3-dehydro-2,3-deoxyribose 5'-phosphate)-DNA + a 5'-end 5'-phospho-2'-deoxyribonucleoside-DNA + H(+). Its function is as follows. Involved in base excision repair of DNA damaged by oxidation or by mutagenic agents. Acts as a DNA glycosylase that recognizes and removes damaged bases. Has a preference for oxidized purines, such as 7,8-dihydro-8-oxoguanine (8-oxoG). Has AP (apurinic/apyrimidinic) lyase activity and introduces nicks in the DNA strand. Cleaves the DNA backbone by beta-delta elimination to generate a single-strand break at the site of the removed base with both 3'- and 5'-phosphates. The polypeptide is Formamidopyrimidine-DNA glycosylase (Mycobacterium sp. (strain JLS)).